A 479-amino-acid chain; its full sequence is Protoheme IX farnesyltransferase (479 aa).

The unknown stretch occupies residues 1–207 (MAEQTATTTS…AYIRLTKPRL (207 aa)). A run of 4 helical transmembrane segments spans residues 20 to 40 (LLAG…TTAV), 64 to 84 (IGWL…CAVV), 98 to 118 (VLIT…VGAV), and 128 to 148 (LSVI…IALA). Residues 155 to 164 (TGDPTETQTT) show a composition bias toward low complexity. The segment at 155–186 (TGDPTETQTTPSKPEPDQDLPPASEYDPDLPA) is disordered. The next 9 helical transmembrane spans lie at 207–227 (LMWL…TTTG), 231–251 (PGIA…SGTF), 271–291 (LATD…LTVI), 303–322 (AAIL…TLLL), 324–344 (PNTV…ALIG), 345–365 (WVAV…VIFL), 402–422 (HVIW…TIEA), 423–443 (LGIV…YFAI), and 459–479 (HASN…TLVI). The interval 208-476 (MWLLCLVASA…AVLIAIVFDT (269 aa)) is protoheme IX prenyltransferase.

It in the C-terminal section; belongs to the UbiA prenyltransferase family. Protoheme IX farnesyltransferase subfamily.

The protein localises to the cell membrane. It carries out the reaction heme b + (2E,6E)-farnesyl diphosphate + H2O = Fe(II)-heme o + diphosphate. It functions in the pathway porphyrin-containing compound metabolism; heme O biosynthesis; heme O from protoheme: step 1/1. Converts heme B (protoheme IX) to heme O by substitution of the vinyl group on carbon 2 of heme B porphyrin ring with a hydroxyethyl farnesyl side group. The chain is Protoheme IX farnesyltransferase (ctaB) from Haloquadratum walsbyi (strain DSM 16790 / HBSQ001).